Reading from the N-terminus, the 427-residue chain is UDP-N-acetylglucosamine 1-carboxyvinyltransferase 1 (427 aa).

24 to 25 contacts phosphoenolpyruvate; sequence KN. Arg97 is a UDP-N-acetyl-alpha-D-glucosamine binding site. Cys121 acts as the Proton donor in catalysis. Cys121 bears the 2-(S-cysteinyl)pyruvic acid O-phosphothioketal mark. UDP-N-acetyl-alpha-D-glucosamine is bound by residues 126–130, Asp309, and Val331; that span reads RPIDL.

The protein belongs to the EPSP synthase family. MurA subfamily.

The protein localises to the cytoplasm. The enzyme catalyses phosphoenolpyruvate + UDP-N-acetyl-alpha-D-glucosamine = UDP-N-acetyl-3-O-(1-carboxyvinyl)-alpha-D-glucosamine + phosphate. It participates in cell wall biogenesis; peptidoglycan biosynthesis. Cell wall formation. Adds enolpyruvyl to UDP-N-acetylglucosamine. In Lactococcus lactis subsp. lactis (strain IL1403) (Streptococcus lactis), this protein is UDP-N-acetylglucosamine 1-carboxyvinyltransferase 1.